The chain runs to 1229 residues: MGSEPPPSEKKVREPFSRAMKDVQISDEQRLKELWHLLDLLEIEYKKTADLHTLISSVSESLTMVWKRRDPKSELALKGLLLILEYCLSHVFDGHAVFEIFVSSLGFNTVIFWKHCAGYIFDSDLGRGTKFRDALLFSLTLYDVNTGKNRLRELYAAVPGIRKSLLGVNAKQFGERYHHLQKRLARYGSHTSLCSVSSDSEGEEAIHNVRSGTHTESESEEDPKAPRSGLATSHFQQRVINVSNAPPVSLKREKTGDWEIKQGSGGLVACVDPVMSKDHENLWLANLGMNINDKKQKRPGSVASIPESFPSTNTLGLPLIKQTIAEVFFHVLADDDMDAPKNEKQKKAREEMSLLGVLNNYNRGNYKLNPVVVQEDDYNVYYGGISNGLLWPALHNLPEYIVSEYDDEKILRAHWCAYVRVNYQFAIDAVRNSRPQDFIWIHDYHLMLVGMIMQSLDQHLEVGFFLHIPFQPPGEFFSKYSTVGFAVLRGLLRFTKVGFQTHRDRTKYIELVQHYFGTAKIVYDNKMDIYSITNEGWTCSLGVFPVSIKNDDFLKFVDLPETIKLKNDLRKRVMGDTPAPDGRFFFSVERFDYTKGIMEKLQAYKRYFERHPDRIGKDVLFQIAVTNRRSVDTYRVYQDECIDLADKINEIFKDPNNPTWKPLVFQTDGLPRSELVAAYLAMDIGVVTPKKDGMNLVAKEMLVCNPKAGLVLSTGAGSEIQFTTAGLYSDKEKNYHRISNVFDPDSYCDAFYSAALEPEDVRAEHGKRLHEFIMANDIERWSCAFLDPSWTHEVIRPTQVETLDDFFSLMMKTRNVRRQIVGRVLKGIPIRSHFAISLRNAKESLEQICKPGTHTAEFKSGPDSKEVAHFEIDNELQEFERDLSFIDYVQSDDADNVEQFVDTLISSHPISVETYKKEVENAVELLYSADHFHYFFTDRDGTLKSYSCSYPSSIQPAYSGVIQAQFARRCAQTCVILTTAPLMHIGVLDVSTIPNGYYYFGASGGREWFIDNGHNFKDESILKGEKADVLASAYTRISHLLEEPEFRPFTWVGSGLQKHYGHLTIAFQDVYKTITEAQGKQLHEEIEKIVKDVDPHGTRLQLASTEFDIKVYMKTETDGHVFDKGDGLRLLCEKMHCDLTEGNVLVCGDSSTDIPMLKECLIRNPKGVYTIWVTVNDKLKEEVRALCASYSNSNVAFVSCPEVLLGAMAQATIREITITRTRKMSRNIV.

The interval 196 to 233 (VSSDSEGEEAIHNVRSGTHTESESEEDPKAPRSGLATS) is disordered. Basic and acidic residues predominate over residues 213 to 225 (THTESESEEDPKA).

In the N-terminal section; belongs to the glycosyltransferase 20 family. This sequence in the C-terminal section; belongs to the gob-1 trehalose phosphatase family.

It carries out the reaction D-glucose 6-phosphate + UDP-alpha-D-glucose = alpha,alpha-trehalose 6-phosphate + UDP + H(+). Functionally, catalyzes the production of trehalose from glucose-6-phosphate and UDP-alpha-D-glucose in a 2 step process. The sequence is that of Alpha,alpha-trehalose-phosphate synthase [UDP-forming] 2 (tps-2) from Caenorhabditis elegans.